The primary structure comprises 307 residues: Homoserine kinase (307 aa).

92 to 102 is a binding site for ATP; it reads PLARGLGSSAT.

This sequence belongs to the GHMP kinase family. Homoserine kinase subfamily.

It is found in the cytoplasm. It carries out the reaction L-homoserine + ATP = O-phospho-L-homoserine + ADP + H(+). It functions in the pathway amino-acid biosynthesis; L-threonine biosynthesis; L-threonine from L-aspartate: step 4/5. Its function is as follows. Catalyzes the ATP-dependent phosphorylation of L-homoserine to L-homoserine phosphate. The polypeptide is Homoserine kinase (thrB) (Microchaete diplosiphon (Fremyella diplosiphon)).